The sequence spans 275 residues: Polyamine aminopropyltransferase (275 aa).

The PABS domain maps to 2 to 235 (EFWFTEKQTE…GMWTFTIGSK (234 aa)). S-methyl-5'-thioadenosine is bound at residue glutamine 31. Positions 62 and 86 each coordinate spermidine. S-methyl-5'-thioadenosine-binding positions include aspartate 106 and 137–138 (DG). Aspartate 155 serves as the catalytic Proton acceptor. A spermidine-binding site is contributed by 155–158 (DSTE). An S-methyl-5'-thioadenosine-binding site is contributed by proline 162.

It belongs to the spermidine/spermine synthase family. In terms of assembly, homodimer or homotetramer.

The protein resides in the cytoplasm. It catalyses the reaction S-adenosyl 3-(methylsulfanyl)propylamine + putrescine = S-methyl-5'-thioadenosine + spermidine + H(+). The protein operates within amine and polyamine biosynthesis; spermidine biosynthesis; spermidine from putrescine: step 1/1. Its function is as follows. Catalyzes the irreversible transfer of a propylamine group from the amino donor S-adenosylmethioninamine (decarboxy-AdoMet) to putrescine (1,4-diaminobutane) to yield spermidine. The protein is Polyamine aminopropyltransferase of Shouchella clausii (strain KSM-K16) (Alkalihalobacillus clausii).